Consider the following 555-residue polypeptide: CTP synthase (555 aa).

The segment at 1 to 279 is amidoligase domain; sequence MATNRAKSST…DNYIIRRLNL (279 aa). S21 lines the CTP pocket. Position 21 (S21) interacts with UTP. Residues 22–27 and D79 each bind ATP; that span reads SLGKGL. The Mg(2+) site is built by D79 and E153. CTP is bound by residues 160 to 162, 200 to 205, and K236; these read DIE and KTKPTQ. UTP is bound by residues 200–205 and K236; that span reads KTKPTQ. The 250-residue stretch at 304–553 folds into the Glutamine amidotransferase type-1 domain; sequence TIGIVGKYID…VDAALKHQAG (250 aa). Position 367 (G367) interacts with L-glutamine. The active-site Nucleophile; for glutamine hydrolysis is the C394. L-glutamine is bound by residues 395–398, E417, and R478; that span reads LGLQ. Residues H526 and E528 contribute to the active site.

Belongs to the CTP synthase family. As to quaternary structure, homotetramer.

It carries out the reaction UTP + L-glutamine + ATP + H2O = CTP + L-glutamate + ADP + phosphate + 2 H(+). It catalyses the reaction L-glutamine + H2O = L-glutamate + NH4(+). The enzyme catalyses UTP + NH4(+) + ATP = CTP + ADP + phosphate + 2 H(+). It functions in the pathway pyrimidine metabolism; CTP biosynthesis via de novo pathway; CTP from UDP: step 2/2. Its activity is regulated as follows. Allosterically activated by GTP, when glutamine is the substrate; GTP has no effect on the reaction when ammonia is the substrate. The allosteric effector GTP functions by stabilizing the protein conformation that binds the tetrahedral intermediate(s) formed during glutamine hydrolysis. Inhibited by the product CTP, via allosteric rather than competitive inhibition. Functionally, catalyzes the ATP-dependent amination of UTP to CTP with either L-glutamine or ammonia as the source of nitrogen. Regulates intracellular CTP levels through interactions with the four ribonucleotide triphosphates. The protein is CTP synthase of Corynebacterium jeikeium (strain K411).